The sequence spans 28 residues: M-ectatotoxin-Eb2c (28 aa).

In terms of tissue distribution, expressed by the venom gland.

It localises to the secreted. Its function is as follows. Antimicrobial peptide active against Gram-negative bacterium E.coli MH1 (MIC=3.5 uM) and P.aeruginosa PAO1 (MIC=10 uM) and against Gram-positive bacterium A.globiformis VKM Ac-1112 (MIC=1.25 uM). The protein is M-ectatotoxin-Eb2c of Ectatomma brunneum (Ant).